Reading from the N-terminus, the 37-residue chain is Photosystem I reaction center subunit VIII (37 aa).

A helical transmembrane segment spans residues 9–29 (SILVTLVGLVFPAFAMASLFL).

This sequence belongs to the PsaI family.

It is found in the plastid. Its subcellular location is the chloroplast thylakoid membrane. Functionally, may help in the organization of the PsaL subunit. The protein is Photosystem I reaction center subunit VIII of Pelargonium hortorum (Common geranium).